The chain runs to 162 residues: Succinate dehydrogenase assembly factor 2, mitochondrial (162 aa).

Residues 1–35 (MHNMFPALTKTLSLQGYKIINSQTGSAAWSCGRRW) constitute a mitochondrion transit peptide.

Belongs to the SDHAF2 family. Interacts with SDH1 within the SDH catalytic dimer.

The protein localises to the mitochondrion matrix. Its function is as follows. Plays an essential role in the assembly of succinate dehydrogenase (SDH), an enzyme complex (also referred to as respiratory complex II) that is a component of both the tricarboxylic acid (TCA) cycle and the mitochondrial electron transport chain, and which couples the oxidation of succinate to fumarate with the reduction of ubiquinone (coenzyme Q) to ubiquinol. Required for flavinylation (covalent attachment of FAD) of the flavoprotein subunit SDH1 of the SDH catalytic dimer. It is unclear whether it participates in the chemistry of FAD attachment (enzymatic function) or acts as a chaperone that maintains SDH1 in a conformation that is susceptible to autocatalytic FAD attachment. Does not bind FAD or FADH(2) in vitro. Involved in sporulation. Required for the full activation of the early meiotic inducer IME1. This Saccharomyces cerevisiae (strain ATCC 204508 / S288c) (Baker's yeast) protein is Succinate dehydrogenase assembly factor 2, mitochondrial.